The chain runs to 157 residues: UPF0262 protein Avi_0642 (157 aa).

It belongs to the UPF0262 family.

In Allorhizobium ampelinum (strain ATCC BAA-846 / DSM 112012 / S4) (Agrobacterium vitis (strain S4)), this protein is UPF0262 protein Avi_0642.